Consider the following 640-residue polypeptide: MTDTPSASDAEAPLRQAAPLWGAALIKDEVTRLPDAPGVYRMIGEADEVLYVGKAKSLKKRVVQYAQGRFHTNRIANMVDATRAMEFITTRTEADALLLEINLIKQLKPRFNVLLRDDKSFPEIVIRRDHDAPQLRKHRGAHTIKGDYFGPFASAWAVNRTLNTLQKAFLLRSCSDSVYDSRDRPCMLYQIKRCAAPCTGLIGKDDYQALVDQAEAFLRGKSRAVMATMAKAMEEAAEELEFERAARLRDRIRALSAVAQETQINPETVEEADVVALHVEGGQACVQVFFFRAGQNWGNRAYFPRITGAADDPEDETVTEEQRIITAFLGQFYDDKPIPRLILANVQPAESELLSEAFALKSGRKVEIAVPKRGEKADLVQHVLTNAREALGRKMAEGSAQTKLLAGVAEAFKLDAPPERIEVYDNSHIQGANAVGGMIVAGPEGFMKGQYRKFNIKSTELTPGDDYGMMKEVLRRRFARLVKEEEEGDDANRPDLVLVDGGQGQLDAAIEIMADLGVDDIAVVGVAKGPDRDAGLERFFIPGQTPFMLEPKSPVLYYLQRLRDEAHRFAIGAHRTRRSMDLKKNPLDEIEGVGPGRKKALLHAFGSAKGVGRASVEDLVKVDGVSQALAERIFGFFRKG.

Residues 35-113 (DAPGVYRMIG…IKQLKPRFNV (79 aa)) enclose the GIY-YIG domain. One can recognise a UVR domain in the interval 223 to 258 (RAVMATMAKAMEEAAEELEFERAARLRDRIRALSAV).

It belongs to the UvrC family. In terms of assembly, interacts with UvrB in an incision complex.

The protein localises to the cytoplasm. Its function is as follows. The UvrABC repair system catalyzes the recognition and processing of DNA lesions. UvrC both incises the 5' and 3' sides of the lesion. The N-terminal half is responsible for the 3' incision and the C-terminal half is responsible for the 5' incision. In Caulobacter vibrioides (strain ATCC 19089 / CIP 103742 / CB 15) (Caulobacter crescentus), this protein is UvrABC system protein C.